A 76-amino-acid chain; its full sequence is MQARVFLLLLGVILLGMMGPMVSAQDGKAGSCPDVNQPIPPLGVCKTTCATDSNCPDIQKCCKNGCGHMSCTRPST.

The signal sequence occupies residues 1–24 (MQARVFLLLLGVILLGMMGPMVSA). Residues 25-75 (QDGKAGSCPDVNQPIPPLGVCKTTCATDSNCPDIQKCCKNGCGHMSCTRPS) enclose the WAP domain. 4 disulfides stabilise this stretch: cysteine 32/cysteine 62, cysteine 45/cysteine 66, cysteine 49/cysteine 61, and cysteine 55/cysteine 71.

It belongs to the venom waprin family. In terms of tissue distribution, expressed by the venom gland.

It is found in the secreted. Damages membranes of susceptible bacteria. Has no hemolytic activity. Not toxic to mice. Does not inhibit the proteinases elastase and cathepsin G. In Rhabdophis tigrinus tigrinus (Tiger keelback snake), this protein is Waprin-Rha1.